Consider the following 110-residue polypeptide: UPF0060 membrane protein Swit_0423 (110 aa).

Helical transmembrane passes span 6-26 (LFIF…FWAW), 29-49 (LGKS…FAWL), 61-81 (AFAA…WAVE), and 90-110 (LIGV…PRTA).

Belongs to the UPF0060 family.

It is found in the cell inner membrane. The polypeptide is UPF0060 membrane protein Swit_0423 (Rhizorhabdus wittichii (strain DSM 6014 / CCUG 31198 / JCM 15750 / NBRC 105917 / EY 4224 / RW1) (Sphingomonas wittichii)).